A 462-amino-acid polypeptide reads, in one-letter code: Argininosuccinate lyase (462 aa).

This sequence belongs to the lyase 1 family. Argininosuccinate lyase subfamily.

Its subcellular location is the cytoplasm. It catalyses the reaction 2-(N(omega)-L-arginino)succinate = fumarate + L-arginine. The protein operates within amino-acid biosynthesis; L-arginine biosynthesis; L-arginine from L-ornithine and carbamoyl phosphate: step 3/3. This Bacillus cereus (strain ATCC 10987 / NRS 248) protein is Argininosuccinate lyase.